The following is a 380-amino-acid chain: Large ribosomal subunit protein mL38 (380 aa).

A mitochondrion-targeting transit peptide spans 1 to 26 (MAAPWWRAAFSVTGRCRGISTSASLS). Positions 98–123 (SRTQKLQERKRFLQELRANSEEERAA) form a coiled coil.

The protein belongs to the phosphatidylethanolamine-binding protein family. Mitochondrion-specific ribosomal protein mL38 subfamily. In terms of assembly, component of the mitochondrial ribosome large subunit (39S) which comprises a 16S rRNA and about 50 distinct proteins.

Its subcellular location is the mitochondrion. The polypeptide is Large ribosomal subunit protein mL38 (Mrpl38) (Rattus norvegicus (Rat)).